We begin with the raw amino-acid sequence, 146 residues long: Hemoglobin subunit beta (146 aa).

The 145-residue stretch at 2–146 (EWTQQERSII…VVFALGRKYH (145 aa)) folds into the Globin domain. The heme b site is built by His63 and His92.

Belongs to the globin family. In terms of assembly, heterotetramer of two alpha chains and two beta chains. As to expression, red blood cells.

Functionally, involved in oxygen transport from gills to the various peripheral tissues. This chain is Hemoglobin subunit beta (hbb), found in Thunnus thynnus (Atlantic bluefin tuna).